The following is a 159-amino-acid chain: Ribonuclease H (159 aa).

Positions 10-153 (TQTQVVIYTD…ADALANQGVE (144 aa)) constitute an RNase H type-1 domain. The Mg(2+) site is built by Asp-19, Glu-57, Asp-79, and Asp-145.

It belongs to the RNase H family. As to quaternary structure, monomer. The cofactor is Mg(2+).

It is found in the cytoplasm. It catalyses the reaction Endonucleolytic cleavage to 5'-phosphomonoester.. Functionally, endonuclease that specifically degrades the RNA of RNA-DNA hybrids. This chain is Ribonuclease H, found in Polaromonas sp. (strain JS666 / ATCC BAA-500).